The chain runs to 321 residues: Probable 3-hydroxyisobutyrate dehydrogenase, mitochondrial (321 aa).

NAD(+) contacts are provided by residues 23 to 52 (KTVGFIGLGNMGGHQAINLIKKGHNLIVFD), 86 to 87 (LP), and Thr-117. The active site involves Lys-192. NAD(+) is bound at residue Lys-267.

Belongs to the HIBADH-related family. 3-hydroxyisobutyrate dehydrogenase subfamily.

It localises to the mitochondrion. The enzyme catalyses 3-hydroxy-2-methylpropanoate + NAD(+) = 2-methyl-3-oxopropanoate + NADH + H(+). It functions in the pathway amino-acid degradation; L-valine degradation. The sequence is that of Probable 3-hydroxyisobutyrate dehydrogenase, mitochondrial (hibA) from Dictyostelium discoideum (Social amoeba).